Reading from the N-terminus, the 503-residue chain is Probable cytosol aminopeptidase (503 aa).

Residues lysine 274 and aspartate 279 each coordinate Mn(2+). The active site involves lysine 286. Mn(2+)-binding residues include aspartate 297, aspartate 356, and glutamate 358. Arginine 360 is a catalytic residue.

Belongs to the peptidase M17 family. It depends on Mn(2+) as a cofactor.

It localises to the cytoplasm. The enzyme catalyses Release of an N-terminal amino acid, Xaa-|-Yaa-, in which Xaa is preferably Leu, but may be other amino acids including Pro although not Arg or Lys, and Yaa may be Pro. Amino acid amides and methyl esters are also readily hydrolyzed, but rates on arylamides are exceedingly low.. It catalyses the reaction Release of an N-terminal amino acid, preferentially leucine, but not glutamic or aspartic acids.. In terms of biological role, presumably involved in the processing and regular turnover of intracellular proteins. Catalyzes the removal of unsubstituted N-terminal amino acids from various peptides. This is Probable cytosol aminopeptidase from Burkholderia orbicola (strain MC0-3).